Reading from the N-terminus, the 81-residue chain is Sec-independent protein translocase protein TatA (81 aa).

The chain crosses the membrane as a helical span at residues 1–21 (MGMPSGQELLIILAIVVLLFG). The segment at 45 to 81 (NEDDDTEVKSASTEAPKKVESAEEVASKESSKTPTQA) is disordered. Residues 59–75 (APKKVESAEEVASKESS) are compositionally biased toward basic and acidic residues.

This sequence belongs to the TatA/E family. As to quaternary structure, the Tat system comprises two distinct complexes: a TatABC complex, containing multiple copies of TatA, TatB and TatC subunits, and a separate TatA complex, containing only TatA subunits. Substrates initially bind to the TatABC complex, which probably triggers association of the separate TatA complex to form the active translocon.

The protein resides in the cell inner membrane. Part of the twin-arginine translocation (Tat) system that transports large folded proteins containing a characteristic twin-arginine motif in their signal peptide across membranes. TatA could form the protein-conducting channel of the Tat system. The protein is Sec-independent protein translocase protein TatA of Sulfurimonas denitrificans (strain ATCC 33889 / DSM 1251) (Thiomicrospira denitrificans (strain ATCC 33889 / DSM 1251)).